The chain runs to 181 residues: MALRPAKIDRYVDKPAYTRREYIRGAPGPKITIFDMGNPAGDFEFEVALHTAEPVQIRQNALEAARQQVNRYLQKNVGRSNYHFKIRVYPFQVLRENPMATGRKADRYGNGMRRPFGKPIGLAARLKRDQKILSIRVNRQHLKFAIEGARRAAMKFPCKCYYRIYDKEGNDVTTKILSQGL.

It belongs to the universal ribosomal protein uL16 family.

This Pyrococcus horikoshii (strain ATCC 700860 / DSM 12428 / JCM 9974 / NBRC 100139 / OT-3) protein is Large ribosomal subunit protein uL16.